Here is a 337-residue protein sequence, read N- to C-terminus: Protein-arginine kinase (337 aa).

Positions 12-240 (IVIASKVKIL…NKLILREKNQ (229 aa)) constitute a Phosphagen kinase C-terminal domain. Residues 15-19 (ASKVK), 162-166 (RAKVF), and 193-198 (KSIYNS) contribute to the ATP site.

This sequence belongs to the ATP:guanido phosphotransferase family.

It catalyses the reaction L-arginyl-[protein] + ATP = N(omega)-phospho-L-arginyl-[protein] + ADP + H(+). Catalyzes the specific phosphorylation of arginine residues in proteins. This is Protein-arginine kinase from Clostridium perfringens (strain ATCC 13124 / DSM 756 / JCM 1290 / NCIMB 6125 / NCTC 8237 / Type A).